Here is a 272-residue protein sequence, read N- to C-terminus: Shikimate dehydrogenase (NADP(+)) (272 aa).

Shikimate contacts are provided by residues serine 14–serine 16 and threonine 61. The active-site Proton acceptor is lysine 65. Glutamate 77 contacts NADP(+). Shikimate contacts are provided by asparagine 86 and aspartate 102. NADP(+) is bound by residues glycine 126–alanine 130, asparagine 149–arginine 154, and methionine 213. Residue tyrosine 215 coordinates shikimate. An NADP(+)-binding site is contributed by glycine 237.

This sequence belongs to the shikimate dehydrogenase family. As to quaternary structure, homodimer.

It carries out the reaction shikimate + NADP(+) = 3-dehydroshikimate + NADPH + H(+). The protein operates within metabolic intermediate biosynthesis; chorismate biosynthesis; chorismate from D-erythrose 4-phosphate and phosphoenolpyruvate: step 4/7. Its function is as follows. Involved in the biosynthesis of the chorismate, which leads to the biosynthesis of aromatic amino acids. Catalyzes the reversible NADPH linked reduction of 3-dehydroshikimate (DHSA) to yield shikimate (SA). The sequence is that of Shikimate dehydrogenase (NADP(+)) from Escherichia coli (strain SMS-3-5 / SECEC).